The primary structure comprises 389 residues: Succinate--CoA ligase [ADP-forming] subunit beta (389 aa).

Positions 9–244 constitute an ATP-grasp domain; the sequence is KQLLAEYGIP…KTQEDETEVT (236 aa). ATP contacts are provided by residues Lys-46, 53-55, Gly-102, and Glu-107; that span reads GRG. Asn-199 and Asp-213 together coordinate Mg(2+). Substrate contacts are provided by residues Asn-264 and 321–323; that span reads GIV.

It belongs to the succinate/malate CoA ligase beta subunit family. As to quaternary structure, heterotetramer of two alpha and two beta subunits. Mg(2+) is required as a cofactor.

It carries out the reaction succinate + ATP + CoA = succinyl-CoA + ADP + phosphate. The catalysed reaction is GTP + succinate + CoA = succinyl-CoA + GDP + phosphate. It functions in the pathway carbohydrate metabolism; tricarboxylic acid cycle; succinate from succinyl-CoA (ligase route): step 1/1. In terms of biological role, succinyl-CoA synthetase functions in the citric acid cycle (TCA), coupling the hydrolysis of succinyl-CoA to the synthesis of either ATP or GTP and thus represents the only step of substrate-level phosphorylation in the TCA. The beta subunit provides nucleotide specificity of the enzyme and binds the substrate succinate, while the binding sites for coenzyme A and phosphate are found in the alpha subunit. The chain is Succinate--CoA ligase [ADP-forming] subunit beta from Xanthomonas axonopodis pv. citri (strain 306).